A 227-amino-acid chain; its full sequence is Cytochrome c oxidase subunit 2 (227 aa).

Residues 1-14 are Mitochondrial intermembrane-facing; that stretch reads MAYPFQLGLQDATS. Residues 15-45 form a helical membrane-spanning segment; that stretch reads PIMEELTNFHDHTLMIVFLISSLVLYIISLM. Over 46-59 the chain is Mitochondrial matrix; sequence LTTKLTHTSTMDAQ. The chain crosses the membrane as a helical span at residues 60 to 87; that stretch reads EVETIWTILPAVILILIALPSLRILYMM. Residues 88 to 227 lie on the Mitochondrial intermembrane side of the membrane; sequence DEINNPVLTV…HFENWSTSMI (140 aa). His-161, Cys-196, Glu-198, Cys-200, His-204, and Met-207 together coordinate Cu cation. Glu-198 provides a ligand contact to Mg(2+).

The protein belongs to the cytochrome c oxidase subunit 2 family. As to quaternary structure, component of the cytochrome c oxidase (complex IV, CIV), a multisubunit enzyme composed of 14 subunits. The complex is composed of a catalytic core of 3 subunits MT-CO1, MT-CO2 and MT-CO3, encoded in the mitochondrial DNA, and 11 supernumerary subunits COX4I, COX5A, COX5B, COX6A, COX6B, COX6C, COX7A, COX7B, COX7C, COX8 and NDUFA4, which are encoded in the nuclear genome. The complex exists as a monomer or a dimer and forms supercomplexes (SCs) in the inner mitochondrial membrane with NADH-ubiquinone oxidoreductase (complex I, CI) and ubiquinol-cytochrome c oxidoreductase (cytochrome b-c1 complex, complex III, CIII), resulting in different assemblies (supercomplex SCI(1)III(2)IV(1) and megacomplex MCI(2)III(2)IV(2)). Found in a complex with TMEM177, COA6, COX18, COX20, SCO1 and SCO2. Interacts with TMEM177 in a COX20-dependent manner. Interacts with COX20. Interacts with COX16. Requires Cu cation as cofactor.

Its subcellular location is the mitochondrion inner membrane. The catalysed reaction is 4 Fe(II)-[cytochrome c] + O2 + 8 H(+)(in) = 4 Fe(III)-[cytochrome c] + 2 H2O + 4 H(+)(out). Component of the cytochrome c oxidase, the last enzyme in the mitochondrial electron transport chain which drives oxidative phosphorylation. The respiratory chain contains 3 multisubunit complexes succinate dehydrogenase (complex II, CII), ubiquinol-cytochrome c oxidoreductase (cytochrome b-c1 complex, complex III, CIII) and cytochrome c oxidase (complex IV, CIV), that cooperate to transfer electrons derived from NADH and succinate to molecular oxygen, creating an electrochemical gradient over the inner membrane that drives transmembrane transport and the ATP synthase. Cytochrome c oxidase is the component of the respiratory chain that catalyzes the reduction of oxygen to water. Electrons originating from reduced cytochrome c in the intermembrane space (IMS) are transferred via the dinuclear copper A center (CU(A)) of subunit 2 and heme A of subunit 1 to the active site in subunit 1, a binuclear center (BNC) formed by heme A3 and copper B (CU(B)). The BNC reduces molecular oxygen to 2 water molecules using 4 electrons from cytochrome c in the IMS and 4 protons from the mitochondrial matrix. The sequence is that of Cytochrome c oxidase subunit 2 (MT-CO2) from Praomys taitae (Taita hill rat).